The primary structure comprises 40 residues: Photosystem II reaction center protein T (40 aa).

A helical membrane pass occupies residues 3 to 23; it reads ALVYTFLLVGTLGIIFFAIFF.

The protein belongs to the PsbT family. As to quaternary structure, PSII is composed of 1 copy each of membrane proteins PsbA, PsbB, PsbC, PsbD, PsbE, PsbF, PsbH, PsbI, PsbJ, PsbK, PsbL, PsbM, PsbT, PsbY, PsbZ, Psb30/Ycf12, at least 3 peripheral proteins of the oxygen-evolving complex and a large number of cofactors. It forms dimeric complexes.

Its subcellular location is the plastid. The protein resides in the chloroplast thylakoid membrane. Found at the monomer-monomer interface of the photosystem II (PS II) dimer, plays a role in assembly and dimerization of PSII. PSII is a light-driven water plastoquinone oxidoreductase, using light energy to abstract electrons from H(2)O, generating a proton gradient subsequently used for ATP formation. This is Photosystem II reaction center protein T from Anthoceros angustus (Hornwort).